Reading from the N-terminus, the 412-residue chain is Proteasome-activating nucleotidase (412 aa).

Positions 15-72 (EDLYRYLLERVTNLEDRNTELREQLRQIEADKRYLETQKVRYEREVRKFKGEIEQMKS) form a coiled coil. ATP contacts are provided by residues 197 to 202 (GTGKTL) and H336. Positions 410 to 412 (MFA) are docks into pockets in the proteasome alpha-ring to cause gate opening.

It belongs to the AAA ATPase family. As to quaternary structure, homohexamer. The hexameric complex has a two-ring architecture resembling a top hat that caps the 20S proteasome core at one or both ends. Upon ATP-binding, the C-terminus of PAN interacts with the alpha-rings of the proteasome core by binding to the intersubunit pockets.

It is found in the cytoplasm. In terms of biological role, ATPase which is responsible for recognizing, binding, unfolding and translocation of substrate proteins into the archaeal 20S proteasome core particle. Is essential for opening the gate of the 20S proteasome via an interaction with its C-terminus, thereby allowing substrate entry and access to the site of proteolysis. Thus, the C-termini of the proteasomal ATPase function like a 'key in a lock' to induce gate opening and therefore regulate proteolysis. Unfolding activity requires energy from ATP hydrolysis, whereas ATP binding alone promotes ATPase-20S proteasome association which triggers gate opening, and supports translocation of unfolded substrates. The protein is Proteasome-activating nucleotidase of Methanosphaerula palustris (strain ATCC BAA-1556 / DSM 19958 / E1-9c).